The primary structure comprises 376 residues: Queuine tRNA-ribosyltransferase (376 aa).

The active-site Proton acceptor is D89. Residues 89 to 93, D143, Q194, and G221 each bind substrate; that span reads DSGGF. The tract at residues 252-258 is RNA binding; it reads GVGLPSN. The active-site Nucleophile is the D271. Residues 276–280 form an RNA binding; important for wobble base 34 recognition region; sequence ARNGR. The Zn(2+) site is built by C309, C311, C314, and H340.

The protein belongs to the queuine tRNA-ribosyltransferase family. Homodimer. Within each dimer, one monomer is responsible for RNA recognition and catalysis, while the other monomer binds to the replacement base PreQ1. The cofactor is Zn(2+).

It catalyses the reaction 7-aminomethyl-7-carbaguanine + guanosine(34) in tRNA = 7-aminomethyl-7-carbaguanosine(34) in tRNA + guanine. The protein operates within tRNA modification; tRNA-queuosine biosynthesis. Its function is as follows. Catalyzes the base-exchange of a guanine (G) residue with the queuine precursor 7-aminomethyl-7-deazaguanine (PreQ1) at position 34 (anticodon wobble position) in tRNAs with GU(N) anticodons (tRNA-Asp, -Asn, -His and -Tyr). Catalysis occurs through a double-displacement mechanism. The nucleophile active site attacks the C1' of nucleotide 34 to detach the guanine base from the RNA, forming a covalent enzyme-RNA intermediate. The proton acceptor active site deprotonates the incoming PreQ1, allowing a nucleophilic attack on the C1' of the ribose to form the product. After dissociation, two additional enzymatic reactions on the tRNA convert PreQ1 to queuine (Q), resulting in the hypermodified nucleoside queuosine (7-(((4,5-cis-dihydroxy-2-cyclopenten-1-yl)amino)methyl)-7-deazaguanosine). The protein is Queuine tRNA-ribosyltransferase of Clostridium tetani (strain Massachusetts / E88).